Here is a 235-residue protein sequence, read N- to C-terminus: Purine nucleoside phosphorylase DeoD-type (235 aa).

H4 is a binding site for a purine D-ribonucleoside. Residues G20, R24, R43, and 87–90 (RVGT) each bind phosphate. Residues 179–181 (EME) and 203–204 (SD) each bind a purine D-ribonucleoside. D204 acts as the Proton donor in catalysis.

It belongs to the PNP/UDP phosphorylase family. In terms of assembly, homohexamer; trimer of homodimers.

It catalyses the reaction a purine D-ribonucleoside + phosphate = a purine nucleobase + alpha-D-ribose 1-phosphate. The enzyme catalyses a purine 2'-deoxy-D-ribonucleoside + phosphate = a purine nucleobase + 2-deoxy-alpha-D-ribose 1-phosphate. Catalyzes the reversible phosphorolytic breakdown of the N-glycosidic bond in the beta-(deoxy)ribonucleoside molecules, with the formation of the corresponding free purine bases and pentose-1-phosphate. This is Purine nucleoside phosphorylase DeoD-type from Brevibacillus brevis (strain 47 / JCM 6285 / NBRC 100599).